We begin with the raw amino-acid sequence, 339 residues long: DNA-directed RNA polymerase subunit alpha (339 aa).

The tract at residues 1 to 233 (MVREEVAGST…DLFLPFLHAE (233 aa)) is alpha N-terminal domain (alpha-NTD). An alpha C-terminal domain (alpha-CTD) region spans residues 264 to 339 (KKGIPLNCIF…IDLLKNKLSF (76 aa)).

The protein belongs to the RNA polymerase alpha chain family. In plastids the minimal PEP RNA polymerase catalytic core is composed of four subunits: alpha, beta, beta', and beta''. When a (nuclear-encoded) sigma factor is associated with the core the holoenzyme is formed, which can initiate transcription.

The protein localises to the plastid. The protein resides in the chloroplast. The enzyme catalyses RNA(n) + a ribonucleoside 5'-triphosphate = RNA(n+1) + diphosphate. In terms of biological role, DNA-dependent RNA polymerase catalyzes the transcription of DNA into RNA using the four ribonucleoside triphosphates as substrates. The chain is DNA-directed RNA polymerase subunit alpha from Thinopyrum bessarabicum (Wheatgrass).